The following is a 654-amino-acid chain: MGKCSALMIFLSSSLLLVLQTLHVVNAVKCFGNSFNGNSSTFAQNRQKLFPTLADKVIINDGFYNASLGQDPDKVYALVSCARGYDQDACYNCVQSLTQNTLTDCRSRRDSFIWGGNDDVTCLVRSSNQSTFGSVQLKPPVVWPSPDTIESSKNITLFKQQWEEMVNRTLEAATKAEGSSVLKYYKAEKAGFTEFPDVYMLMQCTPDLSSRDCKQCLGDCVMYFRKDYMGRKGGMASLPSCYFRWDLYSFHNAFDNVTRVPAPPPRPHAQEKESCITVKKGKSIGYGGIIAIVVVFTFINLLVFIGFIKVYARRGKLNNVGSAEYSDSDGQFMLRFDLGMIVMATDDFSSENTLGQGGFGTVYKGTFPNGQEVAVKRLTKGSGQGDMEFKNEVSLLTRLQHKNLVKLLGFCNEGDEEILVYEFVPNSSLDHFIFDEDKRSLLTWEVRFRIIEGIARGLLYLHEDSQLKIIHRDLKASNILLDAEMNPKVADFGTARLFDSDETRAETKRIAGTRGYMAPEYLNHGQISAKSDVYSFGVMLLEMISGERNNSFEGEGLAAFAWKRWVEGKPEIIIDPFLIENPRNEIIKLIQIGLLCVQENSTKRPTMSSVIIWLGSETIIIPLPKAPAFTWIRSQSESGAMSLSDDVFTELSCR.

The signal sequence occupies residues 1–27 (MGKCSALMIFLSSSLLLVLQTLHVVNA). Gnk2-homologous domains follow at residues 28–131 (VKCF…NQST) and 143–250 (WPSP…LYSF). The Extracellular segment spans residues 28-287 (VKCFGNSFNG…VKKGKSIGYG (260 aa)). 6 N-linked (GlcNAc...) asparagine glycosylation sites follow: N38, N65, N128, N154, N167, and N256. The helical transmembrane segment at 288-308 (GIIAIVVVFTFINLLVFIGFI) threads the bilayer. Over 309–654 (KVYARRGKLN…DDVFTELSCR (346 aa)) the chain is Cytoplasmic. In terms of domain architecture, Protein kinase spans 348-619 (FSSENTLGQG…VIIWLGSETI (272 aa)). Residues 354-362 (LGQGGFGTV) and K376 contribute to the ATP site. The residue at position 421 (Y421) is a Phosphotyrosine. The Proton acceptor role is filled by D473. S477 carries the post-translational modification Phosphoserine. Phosphothreonine is present on T513. Y521 is modified (phosphotyrosine).

The protein belongs to the protein kinase superfamily. Ser/Thr protein kinase family. CRK subfamily.

It is found in the membrane. The enzyme catalyses L-seryl-[protein] + ATP = O-phospho-L-seryl-[protein] + ADP + H(+). It carries out the reaction L-threonyl-[protein] + ATP = O-phospho-L-threonyl-[protein] + ADP + H(+). This chain is Cysteine-rich receptor-like protein kinase 40 (CRK40), found in Arabidopsis thaliana (Mouse-ear cress).